A 947-amino-acid polypeptide reads, in one-letter code: Valine--tRNA ligase (947 aa).

The 'HIGH' region motif lies at 45–55; the sequence is PNVTGSLHMGH. The 'KMSKS' region motif lies at 591 to 595; the sequence is KMSKS. Lys-594 is an ATP binding site.

The protein belongs to the class-I aminoacyl-tRNA synthetase family. ValS type 1 subfamily. As to quaternary structure, monomer.

It is found in the cytoplasm. The enzyme catalyses tRNA(Val) + L-valine + ATP = L-valyl-tRNA(Val) + AMP + diphosphate. Catalyzes the attachment of valine to tRNA(Val). As ValRS can inadvertently accommodate and process structurally similar amino acids such as threonine, to avoid such errors, it has a 'posttransfer' editing activity that hydrolyzes mischarged Thr-tRNA(Val) in a tRNA-dependent manner. The chain is Valine--tRNA ligase from Rhizobium meliloti (strain 1021) (Ensifer meliloti).